The following is a 158-amino-acid chain: Transcription elongation factor GreA (158 aa).

Belongs to the GreA/GreB family.

Its function is as follows. Necessary for efficient RNA polymerase transcription elongation past template-encoded arresting sites. The arresting sites in DNA have the property of trapping a certain fraction of elongating RNA polymerases that pass through, resulting in locked ternary complexes. Cleavage of the nascent transcript by cleavage factors such as GreA or GreB allows the resumption of elongation from the new 3'terminus. GreA releases sequences of 2 to 3 nucleotides. The sequence is that of Transcription elongation factor GreA from Psychrobacter arcticus (strain DSM 17307 / VKM B-2377 / 273-4).